We begin with the raw amino-acid sequence, 293 residues long: Small ribosomal subunit protein uS5 (293 aa).

Positions 1 to 56 are disordered; it reads MADDAGAAGGPGGPGGPGMGGRGGFRGGFGSGVRGRGRGRGRGRGRGRGARGGKAE. Alanine 2 bears the N-acetylalanine mark. Gly residues predominate over residues 7–34; sequence AAGGPGGPGGPGMGGRGGFRGGFGSGVR. Basic residues predominate over residues 35-51; that stretch reads GRGRGRGRGRGRGRGAR. Residues lysine 54 and lysine 58 each participate in a glycyl lysine isopeptide (Lys-Gly) (interchain with G-Cter in ubiquitin) cross-link. The S5 DRBM domain occupies 102-165; it reads LKDEVLKIMP…ILAKLSIVPV (64 aa). A Phosphothreonine modification is found at threonine 252. At lysine 263 the chain carries N6-acetyllysine. Serine 264 carries the post-translational modification Phosphoserine. Threonine 270 is modified (phosphothreonine). N6-acetyllysine; alternate is present on lysine 275. A Glycyl lysine isopeptide (Lys-Gly) (interchain with G-Cter in SUMO1); alternate cross-link involves residue lysine 275. Lysine 275 participates in a covalent cross-link: Glycyl lysine isopeptide (Lys-Gly) (interchain with G-Cter in SUMO2); alternate. Lysine 275 participates in a covalent cross-link: Glycyl lysine isopeptide (Lys-Gly) (interchain with G-Cter in ubiquitin); alternate. Position 281 is a phosphoserine (serine 281).

This sequence belongs to the universal ribosomal protein uS5 family. In terms of assembly, component of the small ribosomal subunit. Interacts with zinc finger protein ZNF277 (via zinc-finger domains); the interaction is direct; the interaction is extra-ribosomal. Interaction with ZNF277 competes with the binding of RPS2 to protein arginine methyltransferase PRMT3. Citrullinated by PADI4 in the Arg/Gly-rich region. Post-translationally, asymmetric arginine dimethylation by PRMT3 occurs at multiple sites in the Arg/Gly-rich region. In terms of processing, monoubiquitinated at Lys-54 and Lys-58 by RNF10 when a ribosome has stalled during translation, leading to its degradation by the proteasome. Deubiquitinated at Lys-54 and Lys-58 by USP10, preventing degradation by the proteasome and promoting 40S ribosome subunit recycling following ribosome dissociation.

It is found in the cytoplasm. The protein resides in the nucleus. The protein localises to the nucleolus. In terms of biological role, component of the ribosome, a large ribonucleoprotein complex responsible for the synthesis of proteins in the cell. The small ribosomal subunit (SSU) binds messenger RNAs (mRNAs) and translates the encoded message by selecting cognate aminoacyl-transfer RNA (tRNA) molecules. The large subunit (LSU) contains the ribosomal catalytic site termed the peptidyl transferase center (PTC), which catalyzes the formation of peptide bonds, thereby polymerizing the amino acids delivered by tRNAs into a polypeptide chain. The nascent polypeptides leave the ribosome through a tunnel in the LSU and interact with protein factors that function in enzymatic processing, targeting, and the membrane insertion of nascent chains at the exit of the ribosomal tunnel. Plays a role in the assembly and function of the 40S ribosomal subunit. Mutations in this protein affects the control of translational fidelity. Involved in nucleolar processing of pre-18S ribosomal RNA and ribosome assembly. The protein is Small ribosomal subunit protein uS5 (RPS2) of Bos taurus (Bovine).